Consider the following 51-residue polypeptide: Insulin (51 aa).

Cystine bridges form between Cys7-Cys37, Cys19-Cys50, and Cys36-Cys41.

The protein belongs to the insulin family. Heterodimer of a B chain and an A chain linked by two disulfide bonds.

It localises to the secreted. In terms of biological role, insulin decreases blood glucose concentration. It increases cell permeability to monosaccharides, amino acids and fatty acids. It accelerates glycolysis, the pentose phosphate cycle, and glycogen synthesis in liver. The polypeptide is Insulin (INS) (Balaenoptera physalus (Fin whale)).